The chain runs to 154 residues: Deoxyuridine 5'-triphosphate nucleotidohydrolase (154 aa).

Substrate-binding positions include 64–66, asparagine 77, 81–83, and lysine 91; these read RSG and TID.

It belongs to the dUTPase family. In terms of assembly, homotrimer. The cofactor is Mg(2+).

It carries out the reaction dUTP + H2O = dUMP + diphosphate + H(+). The protein operates within pyrimidine metabolism; dUMP biosynthesis; dUMP from dCTP (dUTP route): step 2/2. Its function is as follows. This enzyme is involved in nucleotide metabolism: it produces dUMP, the immediate precursor of thymidine nucleotides and it decreases the intracellular concentration of dUTP so that uracil cannot be incorporated into DNA. The polypeptide is Deoxyuridine 5'-triphosphate nucleotidohydrolase (Mycobacterium avium (strain 104)).